The primary structure comprises 109 residues: UPF0060 membrane protein YfjF (109 aa).

4 helical membrane-spanning segments follow: residues 6–26 (ILLFLAAGLAEIGGGYLVWLW), 32–52 (PAGYGIAGALILIVYGILPTF), 61–81 (VYAAYGGVFIVLAVLWGWLVD), and 87–107 (LYDWIGAFICLIGVCVILFAP).

This sequence belongs to the UPF0060 family.

The protein localises to the cell membrane. The polypeptide is UPF0060 membrane protein YfjF (yfjF) (Bacillus subtilis (strain 168)).